A 184-amino-acid polypeptide reads, in one-letter code: Glutathione-regulated potassium-efflux system ancillary protein KefG (184 aa).

This sequence belongs to the NAD(P)H dehydrogenase (quinone) family. KefG subfamily. Interacts with KefB.

It is found in the cell inner membrane. The enzyme catalyses a quinone + NADH + H(+) = a quinol + NAD(+). It catalyses the reaction a quinone + NADPH + H(+) = a quinol + NADP(+). Its function is as follows. Regulatory subunit of a potassium efflux system that confers protection against electrophiles. Required for full activity of KefB. The polypeptide is Glutathione-regulated potassium-efflux system ancillary protein KefG (Yersinia enterocolitica serotype O:8 / biotype 1B (strain NCTC 13174 / 8081)).